A 200-amino-acid polypeptide reads, in one-letter code: AP-5 complex subunit sigma-1 (200 aa).

Probably part of the adaptor protein complex 5 (AP-5) a tetramer composed of AP5B1, AP5M1, AP5S1 and AP5Z1. Interacts with ZFYVE26 and SPG11.

It is found in the cytoplasm. The protein localises to the cytosol. Its subcellular location is the late endosome membrane. It localises to the lysosome membrane. Functionally, as part of AP-5, a probable fifth adaptor protein complex it may be involved in endosomal transport. According to PubMed:20613862, it is required for efficient homologous recombination DNA double-strand break repair. The protein is AP-5 complex subunit sigma-1 (AP5S1) of Homo sapiens (Human).